A 265-amino-acid polypeptide reads, in one-letter code: Thiazole synthase (265 aa).

Lysine 106 serves as the catalytic Schiff-base intermediate with DXP. Residues glycine 167, alanine 193–glycine 194, and asparagine 215–serine 216 contribute to the 1-deoxy-D-xylulose 5-phosphate site.

Belongs to the ThiG family. Homotetramer. Forms heterodimers with either ThiH or ThiS.

The protein localises to the cytoplasm. The catalysed reaction is [ThiS sulfur-carrier protein]-C-terminal-Gly-aminoethanethioate + 2-iminoacetate + 1-deoxy-D-xylulose 5-phosphate = [ThiS sulfur-carrier protein]-C-terminal Gly-Gly + 2-[(2R,5Z)-2-carboxy-4-methylthiazol-5(2H)-ylidene]ethyl phosphate + 2 H2O + H(+). It functions in the pathway cofactor biosynthesis; thiamine diphosphate biosynthesis. Its function is as follows. Catalyzes the rearrangement of 1-deoxy-D-xylulose 5-phosphate (DXP) to produce the thiazole phosphate moiety of thiamine. Sulfur is provided by the thiocarboxylate moiety of the carrier protein ThiS. In vitro, sulfur can be provided by H(2)S. The chain is Thiazole synthase from Prochlorococcus marinus (strain MIT 9515).